The following is a 187-amino-acid chain: Pumilio homolog 26 (187 aa).

Residues 20-42 (VATEFLRVSNDVAELHKLSSKLT) form a Pumilio 1; degenerate repeat. The stretch at 43 to 78 (SDPYLFVEFVKTIRGFLSVQTALGLSGEIDTVFLQV) is one Pumilio 2; degenerate repeat. The stretch at 79–116 (IKGWFPDLITETFSFLIVVRIINLFNKRANSKVYPDIL) is one Pumilio 3; degenerate repeat. Residues 117–154 (RRIGNNALYLTRNPLRGICLVEKAINVRDPDCTVFIAL) form a Pumilio 4; degenerate repeat. One copy of the Pumilio 5 repeat lies at 155-187 (KLHSHYVELSFEELGSNIVEKLLSVGESGICGV).

It localises to the cytoplasm. In terms of biological role, sequence-specific RNA-binding protein that regulates translation and mRNA stability by binding the 3'-UTR of target mRNAs. This is Pumilio homolog 26 (APUM26) from Arabidopsis thaliana (Mouse-ear cress).